We begin with the raw amino-acid sequence, 132 residues long: Small ribosomal subunit protein uS9 (132 aa).

The segment at 104 to 132 (GYLTRDPRMKERKKYGLRKARRAPQFSKR) is disordered. Positions 113–132 (KERKKYGLRKARRAPQFSKR) are enriched in basic residues.

The protein belongs to the universal ribosomal protein uS9 family.

This is Small ribosomal subunit protein uS9 from Natranaerobius thermophilus (strain ATCC BAA-1301 / DSM 18059 / JW/NM-WN-LF).